We begin with the raw amino-acid sequence, 429 residues long: MTEQSAKLTWGEKTVDLPVKTGTIGPSVIDIGALYKNTSTFTYDPGFTSTASCESSITFIDGDEGVLLHRGYPIEQLAEHGDFLEVCYLLLYGELPTAAQKKDFDYRVVHHTMVHEQMSRFFTGFRRDAHPMAVMCGCVGALSAFYHDSTDITDPHQRMVASLRMIAKMPTLAAMAYKYHIGQPFVYPKNDLDYASNFLRMCFAVPCEEYVVNPVLARAMDRIFILHADHEQNASTSTVRLAGSSGANPFACIAAGIACLWGPAHGGANEAALNMLTEIGTVDRIPEYIARAKDKNDPFRLMGFGHRVYKNYDPRAKIMQKTAHEVLGELGIKDDPLLDIAIELERIALTDDYFIEKKLYPNVDFYSGITLKALGFPTTMFTVLFALARTVGWIAQWNEMIEDPDQRIGRPRHVYTGAPLREYVPVSKR.

Catalysis depends on residues H306 and D364.

Belongs to the citrate synthase family.

It catalyses the reaction oxaloacetate + acetyl-CoA + H2O = citrate + CoA + H(+). It participates in carbohydrate metabolism; tricarboxylic acid cycle; isocitrate from oxaloacetate: step 1/2. The polypeptide is Citrate synthase, chromosomal (ccsA) (Rhizobium tropici).